Here is a 761-residue protein sequence, read N- to C-terminus: Ribonucleoside-diphosphate reductase 1 subunit alpha (761 aa).

The ATP-cone domain occupies 5-95 (LLVTKRDGRT…IFHLRKKAFG (91 aa)). ATP contacts are provided by residues Lys9, 15–21 (ERINLDK), Thr55, and Lys91. Thr209 contributes to the GDP binding site. Cys225 and Cys462 are disulfide-bonded. DTTP contacts are provided by residues 232–234 (DSL), Arg262, and Arg269. Asn437 is a binding site for GDP. Asn437 acts as the Proton acceptor in catalysis. Cys439 functions as the Cysteine radical intermediate in the catalytic mechanism. Residues Glu441 and 623–625 (ETS) contribute to the GDP site. Glu441 (proton acceptor) is an active-site residue.

The protein belongs to the ribonucleoside diphosphate reductase large chain family. As to quaternary structure, tetramer of two alpha (R1) and two beta (R2) subunits. The B1 protein is a dimer of alpha subunits. A radical transfer pathway occurs between 'Tyr-122' of R2 and R1.

It catalyses the reaction a 2'-deoxyribonucleoside 5'-diphosphate + [thioredoxin]-disulfide + H2O = a ribonucleoside 5'-diphosphate + [thioredoxin]-dithiol. With respect to regulation, under complex allosteric control mediated by deoxynucleoside triphosphates and ATP binding to separate specificity and activation sites on the alpha subunit. The type of nucleotide bound at the specificity site determines substrate preference. It seems probable that ATP makes the enzyme reduce CDP and UDP, dGTP favors ADP reduction and dTTP favors GDP reduction. Stimulated by ATP and inhibited by dATP binding to the activity site. Provides the precursors necessary for DNA synthesis. Catalyzes the biosynthesis of deoxyribonucleotides from the corresponding ribonucleotides. R1 contains the binding sites for both substrates and allosteric effectors and carries out the actual reduction of the ribonucleotide. This chain is Ribonucleoside-diphosphate reductase 1 subunit alpha (nrdA), found in Salmonella typhimurium (strain LT2 / SGSC1412 / ATCC 700720).